The primary structure comprises 147 residues: MTDIVDLELRVLEESDLSSHLELLGHLTEAPPLSGVELANIADMRRRAGIVTKVFCHQPTGRIVGSASLMIQPKFTRGGRAVGHIEDVVVDPSYRGAGLGKALIMDLCEISRSKGCYKVILDSSEKSLPFYEKLGFRAHERQMRLDL.

In terms of domain architecture, N-acetyltransferase spans 7 to 147; sequence LELRVLEESD…AHERQMRLDL (141 aa). Residues T28 and 86–88 each bind D-glucosamine 6-phosphate; that span reads EDV. Acetyl-CoA-binding positions include 88–90 and 96–101; these read VVV and GAGLGK. D-glucosamine 6-phosphate is bound by residues 117 to 118 and D122; that span reads YK. Residue 131-133 coordinates acetyl-CoA; the sequence is YEK.

This sequence belongs to the acetyltransferase family. GNA1 subfamily. As to quaternary structure, homodimer. Post-translationally, contains poly-N-acetyllactosamines.

The protein resides in the glycosome. It catalyses the reaction D-glucosamine 6-phosphate + acetyl-CoA = N-acetyl-D-glucosamine 6-phosphate + CoA + H(+). It participates in nucleotide-sugar biosynthesis; UDP-N-acetyl-alpha-D-glucosamine biosynthesis; N-acetyl-alpha-D-glucosamine 1-phosphate from alpha-D-glucosamine 6-phosphate (route I): step 1/2. Its function is as follows. Involved in the biosynthesis of UDP-N-acetyl-alpha-D-glucosamine. Catalyzes the formation of N-acetyl-D-glucosamine 6-phosphate from acetyl-coenzyme A (acetyl-CoA) and D-glucosamine 6-phosphate. The protein is Glucosamine 6-phosphate N-acetyltransferase of Trypanosoma brucei brucei.